The chain runs to 271 residues: Acetyl-coenzyme A carboxylase carboxyl transferase subunit beta (271 aa).

One can recognise a CoA carboxyltransferase N-terminal domain in the interval 21 to 271 (LWIQCPYCKQ…LGDLLALHTA (251 aa)). Cys25, Cys28, Cys43, and Cys46 together coordinate Zn(2+). A C4-type zinc finger spans residues 25–46 (CPYCKQGSYRESLGNAQVCPHC).

It belongs to the AccD/PCCB family. In terms of assembly, acetyl-CoA carboxylase is a heterohexamer composed of biotin carboxyl carrier protein (AccB), biotin carboxylase (AccC) and two subunits each of ACCase subunit alpha (AccA) and ACCase subunit beta (AccD). Zn(2+) serves as cofactor.

It localises to the cytoplasm. It catalyses the reaction N(6)-carboxybiotinyl-L-lysyl-[protein] + acetyl-CoA = N(6)-biotinyl-L-lysyl-[protein] + malonyl-CoA. It functions in the pathway lipid metabolism; malonyl-CoA biosynthesis; malonyl-CoA from acetyl-CoA: step 1/1. In terms of biological role, component of the acetyl coenzyme A carboxylase (ACC) complex. Biotin carboxylase (BC) catalyzes the carboxylation of biotin on its carrier protein (BCCP) and then the CO(2) group is transferred by the transcarboxylase to acetyl-CoA to form malonyl-CoA. The protein is Acetyl-coenzyme A carboxylase carboxyl transferase subunit beta of Lacticaseibacillus casei (strain BL23) (Lactobacillus casei).